An 87-amino-acid polypeptide reads, in one-letter code: MVCIPCIVIPVLLWVYKRFLEPIIYPFIGPIISRFWPTNIAVQENGTGDVKASEKSNGACKTKADVVVANGPSANGPATPISDKKID.

It belongs to the UPF0729 family.

In Esox lucius (Northern pike), this protein is UPF0729 protein C18orf32 homolog.